We begin with the raw amino-acid sequence, 124 residues long: Small ribosomal subunit protein eS6 (124 aa).

This sequence belongs to the eukaryotic ribosomal protein eS6 family.

The protein is Small ribosomal subunit protein eS6 of Thermoplasma acidophilum (strain ATCC 25905 / DSM 1728 / JCM 9062 / NBRC 15155 / AMRC-C165).